Reading from the N-terminus, the 468-residue chain is Sorting and assembly machinery component 50 homolog A (468 aa).

The disordered stretch occupies residues 1-24; the sequence is MGTVHARSLDPLPMNGPDFGSPDD. The 81-residue stretch at 44–124 folds into the POTRA domain; the sequence is VVVQRVHFEG…LDVTFEVTEL (81 aa).

It belongs to the SAM50/omp85 family. Associates with the mitochondrial contact site and cristae organizing system (MICOS) complex (also known as MINOS or MitOS complex).

The protein localises to the mitochondrion outer membrane. May play a role in the maintenance of the structure of mitochondrial cristae. The chain is Sorting and assembly machinery component 50 homolog A (samm50-a) from Xenopus laevis (African clawed frog).